Here is a 353-residue protein sequence, read N- to C-terminus: UDP-3-O-acylglucosamine N-acyltransferase (353 aa).

Residue histidine 242 is the Proton acceptor of the active site.

The protein belongs to the transferase hexapeptide repeat family. LpxD subfamily. As to quaternary structure, homotrimer.

It catalyses the reaction a UDP-3-O-[(3R)-3-hydroxyacyl]-alpha-D-glucosamine + a (3R)-hydroxyacyl-[ACP] = a UDP-2-N,3-O-bis[(3R)-3-hydroxyacyl]-alpha-D-glucosamine + holo-[ACP] + H(+). It functions in the pathway bacterial outer membrane biogenesis; LPS lipid A biosynthesis. Catalyzes the N-acylation of UDP-3-O-acylglucosamine using 3-hydroxyacyl-ACP as the acyl donor. Is involved in the biosynthesis of lipid A, a phosphorylated glycolipid that anchors the lipopolysaccharide to the outer membrane of the cell. This Pseudomonas aeruginosa (strain UCBPP-PA14) protein is UDP-3-O-acylglucosamine N-acyltransferase.